A 187-amino-acid polypeptide reads, in one-letter code: Glutathione peroxidase 7 (187 aa).

A signal peptide spans 1–19 (MVAATVAAAWLLLWAAACA). Residue cysteine 57 is part of the active site.

This sequence belongs to the glutathione peroxidase family. In terms of tissue distribution, expressed in esophageal epithelial cells; expression is up-regulated after exposure to acidic bile acids.

The protein resides in the secreted. It carries out the reaction 2 glutathione + H2O2 = glutathione disulfide + 2 H2O. Functionally, it protects esophageal epithelia from hydrogen peroxide-induced oxidative stress. It suppresses acidic bile acid-induced reactive oxygen species (ROS) and protects against oxidative DNA damage and double-strand breaks. This Homo sapiens (Human) protein is Glutathione peroxidase 7 (GPX7).